Reading from the N-terminus, the 344-residue chain is uncharacterized protein (344 aa).

8 helical membrane passes run 25 to 45 (GAGW…VGAV), 68 to 88 (FVDA…ADGV), 104 to 124 (GVVP…GWNC), 133 to 153 (SACA…GVGA), 161 to 181 (GVGT…LAVV), 224 to 244 (LGAF…DAAL), 276 to 296 (VFAL…PAAL), and 302 to 322 (LVTA…LAGV).

It belongs to the peptidase S58 family.

It is found in the cell membrane. Aminopeptidase. This is an uncharacterized protein from Mycobacterium bovis (strain ATCC BAA-935 / AF2122/97).